The sequence spans 583 residues: MASISLFPYSILKQTSPLARGTAYNRIYSTKTTGITVDVAESHVRRSANYEPSSWSFDHIQSLSSKYTGDDCVARANTLKESVKTMIRKEGNLLRTLELVDELQRLGISYLFEGEISNLLETIYYNHYKFPEKWNKFDLNLKALGFRLLRQHGYHVPQEIFLNFKDKNQNLNSYLLEDVVGMLNLYEASYHSFEDESILTEARDIATKYLKASLEKIDGSILSLVSHALDNRLHWRVPRVESKWFIEVYEKRVGASPTLIELAKLDFDMVQAIHLEDLKHASRWWRNTSWDTKLTFARDMLVENFLWTVGFSYLPNFSHGRRTITKVAAMITTLDDVYDVFGTLGELEQFTDVINRWDIKAIEQLPDYMKICFFGLYNSINDITYETLATKGFLILPYIKKAWADLCKSYLVEAQWYHRGHIPTLNEYLDNACVSISGPVALMHVHFLTSVSSTKEIHHCIERTQNIVRYVSLIFRLTDDLGTSLGEMERGDTLKSIQLYMHETGATEPEARSYIKSLIDKTWKKLNKERAIVSSESSREFIDYATNLARMAHFMYGEGDEDFRLDVIKSHVSSLLFTPIQGI.

The transit peptide at 1-40 directs the protein to the chloroplast; sequence MASISLFPYSILKQTSPLARGTAYNRIYSTKTTGITVDVA. Positions 298, 335, 339, 476, and 479 each coordinate (2E)-geranyl diphosphate. The Mg(2+) site is built by D335 and D339. A DDXXD motif motif is present at residues 335-339; that stretch reads DDVYD. 3 residues coordinate Mg(2+): D479, T483, and E487. D492 is a binding site for K(+).

The protein belongs to the terpene synthase family. Tpsb subfamily. Mg(2+) is required as a cofactor. The cofactor is Mn(2+). It depends on K(+) as a cofactor. As to expression, expressed in every aerial organ except for the stem stele of mature plants. Not detected in roots.

The protein resides in the plastid. It is found in the chloroplast. It catalyses the reaction (2E)-geranyl diphosphate + H2O = (R)-linalool + diphosphate. The protein operates within secondary metabolite biosynthesis; terpenoid biosynthesis. Its function is as follows. Monoterpene synthase that catalyzes the formation of (3R)-linalool from geranyl diphosphate, but not from isopentenyl diphosphate, dimethylallyl diphosphate, chrysanthemyl diphosphate, farnesyl diphosphate, (+)-copalyl diphosphate or geranylgeranyl diphosphate. In Artemisia annua (Sweet wormwood), this protein is R-linalool synthase QH5, chloroplastic.